Consider the following 316-residue polypeptide: Putative ring-cleaving dioxygenase MhqA (316 aa).

VOC domains follow at residues 5–131 (GIHH…LTAD) and 154–278 (GLGP…LSTD). Fe cation contacts are provided by His8, His226, and Glu274.

It belongs to the extradiol ring-cleavage dioxygenase family. Fe(2+) serves as cofactor.

Its subcellular location is the cytoplasm. Putative ring-cleavage dioxygenase that may contribute to the degradation of aromatic compounds. The sequence is that of Putative ring-cleaving dioxygenase MhqA (mhqA) from Bacillus subtilis (strain 168).